The sequence spans 207 residues: Guanylate kinase (207 aa).

One can recognise a Guanylate kinase-like domain in the interval 3–181; sequence GQLFVICGPS…AVEMVVSIVR (179 aa). Position 10–17 (10–17) interacts with ATP; it reads GPSGAGKT.

The protein belongs to the guanylate kinase family.

It is found in the cytoplasm. It catalyses the reaction GMP + ATP = GDP + ADP. Its function is as follows. Essential for recycling GMP and indirectly, cGMP. In Thermotoga maritima (strain ATCC 43589 / DSM 3109 / JCM 10099 / NBRC 100826 / MSB8), this protein is Guanylate kinase (gmk).